The chain runs to 380 residues: Large ribosomal subunit protein mL38 (380 aa).

A mitochondrion-targeting transit peptide spans 1–26; sequence MAAPWWRAAFSVTGRCRGISTSASLS. The stretch at 98–123 forms a coiled coil; it reads SRTQKLQERKRFLQELRANSEEERAA.

The protein belongs to the phosphatidylethanolamine-binding protein family. Mitochondrion-specific ribosomal protein mL38 subfamily. As to quaternary structure, component of the mitochondrial ribosome large subunit (39S) which comprises a 16S rRNA and about 50 distinct proteins.

The protein localises to the mitochondrion. The sequence is that of Large ribosomal subunit protein mL38 (Mrpl38) from Rattus norvegicus (Rat).